The following is a 1273-amino-acid chain: Inverted formin-2 (1273 aa).

Disordered stretches follow at residues 1-30 (MSVK…EANL), 346-387 (GRPR…GQQP), 427-559 (LSSS…PLPG), 960-999 (NKDR…GPGK), and 1021-1273 (KTAR…CVIQ). Serine 2 is subject to N-acetylserine. In terms of domain architecture, GBD/FH3 spans 2–330 (SVKEGAQRKW…RAVLLASDAQ (329 aa)). Position 351 is a phosphoserine (serine 351). The segment covering 359–382 (SVQTNSVQNQGSSSQNTTTPTTKV) has biased composition (low complexity). In terms of domain architecture, FH1 spans 421–564 (PLPTPPLSSS…PPLPGFSVPS (144 aa)). 2 stretches are compositionally biased toward pro residues: residues 433–516 (VLPP…PLPS) and 524–558 (QPPP…PPLP). Residues 589–979 (HRRVNPPTLR…AERRKQQLAE (391 aa)) form the FH2 domain. A coiled-coil region spans residues 907-984 (EASQELDKVF…QQLAEEEARR (78 aa)). Positions 1007-1022 (DALLADIRKGFQLRKT) constitute a WH2 domain. A compositionally biased stretch (polar residues) spans 1047-1059 (ATASNPTQGTNHP). Basic and acidic residues predominate over residues 1088 to 1101 (SKEEDGPPALERRS). Serine 1172 and serine 1174 each carry phosphoserine. Residues 1195–1204 (GEDEDGEDTA) are compositionally biased toward acidic residues. A Phosphothreonine modification is found at threonine 1203. A phosphoserine mark is found at serine 1216 and serine 1218. Phosphothreonine occurs at positions 1223 and 1230. The segment covering 1242 to 1251 (TSKRRKKRPS) has biased composition (basic residues).

Belongs to the formin homology family. As to quaternary structure, interacts with profilin and actin at the FH1 and FH2 domains respectively. Interacts with DAAM2.

Its subcellular location is the cytoplasm. It is found in the perinuclear region. Its activity is regulated as follows. Phosphate inhibits both the depolymerization and severing activities. Severs actin filaments and accelerates their polymerization and depolymerization. The sequence is that of Inverted formin-2 (Inf2) from Mus musculus (Mouse).